A 385-amino-acid chain; its full sequence is Chaperone protein DnaJ (385 aa).

In terms of domain architecture, J spans 5-70 (DFYEVLGVSR…QKKAAYDQYG (66 aa)). The segment at 137 to 214 (GVSKEIEVPT…CHGQGRKQKT (78 aa)) adopts a CR-type zinc-finger fold. Residues cysteine 150, cysteine 153, cysteine 167, cysteine 170, cysteine 189, cysteine 192, cysteine 202, and cysteine 205 each contribute to the Zn(2+) site. CXXCXGXG motif repeat units lie at residues 150 to 157 (CDTCDGSG), 167 to 174 (CGTCHGHG), 189 to 196 (CPTCHGKG), and 202 to 209 (CNECHGQG).

Belongs to the DnaJ family. In terms of assembly, homodimer. The cofactor is Zn(2+).

Its subcellular location is the cytoplasm. In terms of biological role, participates actively in the response to hyperosmotic and heat shock by preventing the aggregation of stress-denatured proteins and by disaggregating proteins, also in an autonomous, DnaK-independent fashion. Unfolded proteins bind initially to DnaJ; upon interaction with the DnaJ-bound protein, DnaK hydrolyzes its bound ATP, resulting in the formation of a stable complex. GrpE releases ADP from DnaK; ATP binding to DnaK triggers the release of the substrate protein, thus completing the reaction cycle. Several rounds of ATP-dependent interactions between DnaJ, DnaK and GrpE are required for fully efficient folding. Also involved, together with DnaK and GrpE, in the DNA replication of plasmids through activation of initiation proteins. In Vibrio harveyi (Beneckea harveyi), this protein is Chaperone protein DnaJ.